The primary structure comprises 714 residues: MMQESATETISNSSMNQNGMSTLSSQLDAGSRDGRSSGDTSSEVSTVELLHLQQQQALQAARQLLLQQQTSGLKSPKSSDKQRPLQVPVSVAMMTPQVITPQQMQQILQQQVLSPQQLQALLQQQQAVMLQQQQLQEFYKKQQEQLHLQLLQQQQQQQQQQQQQQQQQQQQQQQQQQQQQQQQQQQQQQQHPGKQAKEQQQQQQQQQQLAAQQLVFQQQLLQMQQLQQQQHLLSLQRQGLISIPPGQAALPVQSLPQAGLSPAEIQQLWKEVTGVHSMEDNGIKHGGLDLTTNNSSSTTSSTTSKASPPITHHSIVNGQSSVLNARRDSSSHEETGASHTLYGHGVCKWPGCESICEDFGQFLKHLNNEHALDDRSTAQCRVQMQVVQQLEIQLSKERERLQAMMTHLHMRPSEPKPSPKPLNLVSSVTMSKNMLETSPQSLPQTPTTPTAPVTPITQGPSVITPASVPNVGAIRRRHSDKYNIPMSSEIAPNYEFYKNADVRPPFTYATLIRQAIMESSDRQLTLNEIYSWFTRTFAYFRRNAATWKNAVRHNLSLHKCFVRVENVKGAVWTVDEVEYQKRRSQKITGSPTLVKNIPTSLGYGAALNASLQAALAESSLPLLSNPGLINNASSGLLQAVHEDLNGSLDHIDSNGNSSPGCSPQPHIHSIHVKEEPVIAEDEDCPMSLVTTANHSPELEDDREIEEEPLSEDLE.

Residues 1 to 28 (MMQESATETISNSSMNQNGMSTLSSQLD) are compositionally biased toward polar residues. Disordered stretches follow at residues 1–45 (MMQE…SEVS) and 284–338 (KHGG…TGAS). A compositionally biased stretch (low complexity) spans 291 to 304 (TTNNSSSTTSSTTS). The span at 314 to 323 (SIVNGQSSVL) shows a compositional bias: polar residues. A compositionally biased stretch (basic and acidic residues) spans 325-336 (ARRDSSSHEETG). The segment at 345–370 (GVCKWPGCESICEDFGQFLKHLNNEH) adopts a C2H2-type zinc-finger fold. The leucine-zipper stretch occupies residues 387-408 (VQQLEIQLSKERERLQAMMTHL). Residues 421–425 (PLNLV) form a CTBP1-binding region. The span at 437–458 (TSPQSLPQTPTTPTAPVTPITQ) shows a compositional bias: low complexity. The tract at residues 437–464 (TSPQSLPQTPTTPTAPVTPITQGPSVIT) is disordered. The segment at residues 503–593 (RPPFTYATLI…SQKITGSPTL (91 aa)) is a DNA-binding region (fork-head). 2 disordered regions span residues 648-667 (LDHI…QPHI) and 677-714 (VIAE…EDLE). A compositionally biased stretch (acidic residues) spans 698–714 (LEDDREIEEEPLSEDLE).

In terms of assembly, forms homodimers and heterodimers with FOXP1 and FOXP4. Dimerization is required for DNA-binding. Interacts with CTBP1. Interacts with FOXP1. Interacts with TBR1. Interacts with ZMYM2.

It is found in the nucleus. Transcriptional repressor that may play a role in the specification and differentiation of lung epithelium. May also play a role in developing neural, gastrointestinal and cardiovascular tissues. Can act with CTBP1 to synergistically repress transcription but CTPBP1 is not essential. Plays a role in synapse formation by regulating SRPX2 levels. This is Forkhead box protein P2 (FOXP2) from Macaca mulatta (Rhesus macaque).